A 274-amino-acid polypeptide reads, in one-letter code: Glutamate racemase (274 aa).

Residues 9–10 (DS) and 41–42 (YG) contribute to the substrate site. The Proton donor/acceptor role is filled by cysteine 73. 74–75 (NT) serves as a coordination point for substrate. The active-site Proton donor/acceptor is the cysteine 183. 184-185 (TH) is a substrate binding site.

The protein belongs to the aspartate/glutamate racemases family.

It carries out the reaction L-glutamate = D-glutamate. It participates in cell wall biogenesis; peptidoglycan biosynthesis. Its function is as follows. Provides the (R)-glutamate required for cell wall biosynthesis. The protein is Glutamate racemase of Shewanella baltica (strain OS223).